Consider the following 303-residue polypeptide: RELT-like protein 2 (303 aa).

The helical transmembrane segment at 15–35 threads the bilayer; that stretch reads LYMLFLLVLVFFLMGLVGFMI. Disordered stretches follow at residues 46–67 and 132–303; these read CRTS…DDDM and CLHC…AGSM. Serine 52 carries the phosphoserine modification. Basic and acidic residues-rich tracts occupy residues 148–158 and 172–188; these read RSKEGKSRPRT and THIE…DGSP. Positions 194-212 are enriched in gly residues; the sequence is GSGGGQDPGGGQGSGGGQP. The segment covering 278–296 has biased composition (polar residues); the sequence is QEANGQPSKPDTSDHQVSL.

Belongs to the RELT family. As to quaternary structure, interacts with RELT, RELL1 and OXSR1. Interacts with PLSCR1. Interacts with TRAF2. In terms of processing, phosphorylated in vitro by OXSR1. In terms of tissue distribution, primarily expressed in spleen, thymus, testis, peripheral blood leukocytes, brain and placenta. Not detected in prostate, ovary, small intestine, colon, heart, lung, liver, skeletal muscle, kidney and pancreas.

The protein resides in the cell membrane. Its function is as follows. Induces activation of MAPK14/p38 cascade, when overexpressed. Induces apoptosis, when overexpressed. The protein is RELT-like protein 2 (RELL2) of Homo sapiens (Human).